The chain runs to 276 residues: Diaminopimelate epimerase (276 aa).

Substrate is bound by residues asparagine 13, glutamine 46, and asparagine 66. The active-site Proton donor is cysteine 75. Residues 76-77 (GN), asparagine 159, asparagine 192, and 210-211 (ER) each bind substrate. Cysteine 219 acts as the Proton acceptor in catalysis. 220-221 (GT) contacts substrate.

It belongs to the diaminopimelate epimerase family. In terms of assembly, homodimer.

Its subcellular location is the cytoplasm. The enzyme catalyses (2S,6S)-2,6-diaminopimelate = meso-2,6-diaminopimelate. The protein operates within amino-acid biosynthesis; L-lysine biosynthesis via DAP pathway; DL-2,6-diaminopimelate from LL-2,6-diaminopimelate: step 1/1. Catalyzes the stereoinversion of LL-2,6-diaminopimelate (L,L-DAP) to meso-diaminopimelate (meso-DAP), a precursor of L-lysine and an essential component of the bacterial peptidoglycan. This Teredinibacter turnerae (strain ATCC 39867 / T7901) protein is Diaminopimelate epimerase.